Reading from the N-terminus, the 136-residue chain is S-protein homolog 6 (136 aa).

The first 17 residues, 1–17 (MFIIIFIVLISLIGCET), serve as a signal peptide directing secretion. Asn-76 and Asn-108 each carry an N-linked (GlcNAc...) asparagine glycan.

It belongs to the plant self-incompatibility (S1) protein family.

It localises to the secreted. This Arabidopsis thaliana (Mouse-ear cress) protein is S-protein homolog 6.